Here is a 542-residue protein sequence, read N- to C-terminus: Isocitrate lyase (542 aa).

Residue 102–104 (SGW) participates in substrate binding. Asp170 provides a ligand contact to Mg(2+). The Proton acceptor role is filled by Cys208. Residues 209 to 210 (GH), Arg245, 428 to 432 (NLSPS), and Thr462 contribute to the substrate site.

The protein belongs to the isocitrate lyase/PEP mutase superfamily. Isocitrate lyase family. Homotetramer. Mg(2+) serves as cofactor.

It is found in the glyoxysome. It catalyses the reaction D-threo-isocitrate = glyoxylate + succinate. It carries out the reaction (2S,3R)-3-hydroxybutane-1,2,3-tricarboxylate = pyruvate + succinate. The protein operates within carbohydrate metabolism; glyoxylate cycle; (S)-malate from isocitrate: step 1/2. Catalyzes the formation of succinate and glyoxylate from isocitrate, a key step of the glyoxylate cycle, which operates as an anaplerotic route for replenishing the tricarboxylic acid cycle. Required for growth on ethanol or acetate, but dispensable when fermentable carbon sources are available. Also acts on 2-methylisocitrate. The chain is Isocitrate lyase from Kluyveromyces lactis (strain ATCC 8585 / CBS 2359 / DSM 70799 / NBRC 1267 / NRRL Y-1140 / WM37) (Yeast).